A 762-amino-acid chain; its full sequence is Phosphoribosylformylglycinamidine synthase subunit PurL (762 aa).

Residue His-58 is part of the active site. Tyr-61 and Lys-105 together coordinate ATP. A Mg(2+)-binding site is contributed by Glu-107. Residues Ser-108 to His-111 and Arg-130 contribute to the substrate site. His-109 acts as the Proton acceptor in catalysis. Asp-131 is a binding site for Mg(2+). Gln-260 is a substrate binding site. Asp-288 serves as a coordination point for Mg(2+). Position 332-334 (Glu-332–Gln-334) interacts with substrate. Residues Asn-520 and Gly-557 each contribute to the ATP site. Position 558 (Asn-558) interacts with Mg(2+). Residue Ser-560 participates in substrate binding.

Belongs to the FGAMS family. Monomer. Part of the FGAM synthase complex composed of 1 PurL, 1 PurQ and 2 PurS subunits.

It localises to the cytoplasm. It carries out the reaction N(2)-formyl-N(1)-(5-phospho-beta-D-ribosyl)glycinamide + L-glutamine + ATP + H2O = 2-formamido-N(1)-(5-O-phospho-beta-D-ribosyl)acetamidine + L-glutamate + ADP + phosphate + H(+). The protein operates within purine metabolism; IMP biosynthesis via de novo pathway; 5-amino-1-(5-phospho-D-ribosyl)imidazole from N(2)-formyl-N(1)-(5-phospho-D-ribosyl)glycinamide: step 1/2. Functionally, part of the phosphoribosylformylglycinamidine synthase complex involved in the purines biosynthetic pathway. Catalyzes the ATP-dependent conversion of formylglycinamide ribonucleotide (FGAR) and glutamine to yield formylglycinamidine ribonucleotide (FGAM) and glutamate. The FGAM synthase complex is composed of three subunits. PurQ produces an ammonia molecule by converting glutamine to glutamate. PurL transfers the ammonia molecule to FGAR to form FGAM in an ATP-dependent manner. PurS interacts with PurQ and PurL and is thought to assist in the transfer of the ammonia molecule from PurQ to PurL. This Rhodococcus erythropolis (strain PR4 / NBRC 100887) protein is Phosphoribosylformylglycinamidine synthase subunit PurL.